A 164-amino-acid chain; its full sequence is HTH-type transcriptional regulator IscR (164 aa).

Residues 2-131 form the HTH rrf2-type domain; sequence RLTSKGRYAV…NNITLGELVN (130 aa). Residues 28–51 constitute a DNA-binding region (H-T-H motif); the sequence is LADISERQGISLSYLEQLFSRLRK. Residues Cys-92, Cys-98, and Cys-104 each coordinate [2Fe-2S] cluster.

[2Fe-2S] cluster serves as cofactor.

Its function is as follows. Regulates the transcription of several operons and genes involved in the biogenesis of Fe-S clusters and Fe-S-containing proteins. This chain is HTH-type transcriptional regulator IscR, found in Salmonella choleraesuis (strain SC-B67).